We begin with the raw amino-acid sequence, 303 residues long: MHIYILGSAAGGGCPQWNCNCPNCHGVRTGTINAKVRTQSSIAISENGVDWILLNASPDIRQQLFDFKAAQPARKLRDTGITNVILMDSQLDHTTGLLTLREGCPMNVWCTEMVYQDLTTGFPVFNMLKHWNGGLQYHQVDPKQAFIIDGFENLEFLPLIIQSAAPPYSPHRHDPHEGDNIALIIKDHKTQKQLFYAPGLGKIDDQIMQIMQDSDCVMIDGTLWTDDEMQQTGVGKKTGREMGHLYISGEGGSLSYLNQLSTPKKVLIHINNTNPILNEDSAQFAELKANGVEVAFDGMQIEL.

It belongs to the PqqB family.

It functions in the pathway cofactor biosynthesis; pyrroloquinoline quinone biosynthesis. May be involved in the transport of PQQ or its precursor to the periplasm. The sequence is that of Coenzyme PQQ synthesis protein B from Acinetobacter baumannii (strain SDF).